The chain runs to 103 residues: G0/G1 switch protein 2 (103 aa).

In terms of assembly, directly interacts with BCL2; this interaction prevents the formation of the anti-apoptotic BAX-BCL2 complex.

It is found in the mitochondrion. Its function is as follows. Promotes apoptosis by binding to BCL2, hence preventing the formation of protective BCL2-BAX heterodimers. The sequence is that of G0/G1 switch protein 2 (G0s2) from Rattus norvegicus (Rat).